The primary structure comprises 211 residues: Ribosome maturation factor RimM (211 aa).

The PRC barrel domain maps to 111–182; the sequence is PDAWYDHQLV…TLVITPPLGL (72 aa). The disordered stretch occupies residues 184-211; the sequence is EEIPDEQPTPSATSDAEPGSAPEGDDAR.

This sequence belongs to the RimM family. Binds ribosomal protein uS19.

The protein localises to the cytoplasm. An accessory protein needed during the final step in the assembly of 30S ribosomal subunit, possibly for assembly of the head region. Essential for efficient processing of 16S rRNA. May be needed both before and after RbfA during the maturation of 16S rRNA. It has affinity for free ribosomal 30S subunits but not for 70S ribosomes. This Clavibacter sepedonicus (Clavibacter michiganensis subsp. sepedonicus) protein is Ribosome maturation factor RimM.